The chain runs to 412 residues: Serine hydroxymethyltransferase (412 aa).

Residues Leu120 and 124–126 (GHL) contribute to the (6S)-5,6,7,8-tetrahydrofolate site. At Lys229 the chain carries N6-(pyridoxal phosphate)lysine. Residue 352-354 (SPF) coordinates (6S)-5,6,7,8-tetrahydrofolate.

This sequence belongs to the SHMT family. As to quaternary structure, homodimer. Requires pyridoxal 5'-phosphate as cofactor.

The protein resides in the cytoplasm. The enzyme catalyses (6R)-5,10-methylene-5,6,7,8-tetrahydrofolate + glycine + H2O = (6S)-5,6,7,8-tetrahydrofolate + L-serine. It functions in the pathway one-carbon metabolism; tetrahydrofolate interconversion. It participates in amino-acid biosynthesis; glycine biosynthesis; glycine from L-serine: step 1/1. Functionally, catalyzes the reversible interconversion of serine and glycine with tetrahydrofolate (THF) serving as the one-carbon carrier. This reaction serves as the major source of one-carbon groups required for the biosynthesis of purines, thymidylate, methionine, and other important biomolecules. Also exhibits THF-independent aldolase activity toward beta-hydroxyamino acids, producing glycine and aldehydes, via a retro-aldol mechanism. This chain is Serine hydroxymethyltransferase, found in Acetivibrio thermocellus (strain ATCC 27405 / DSM 1237 / JCM 9322 / NBRC 103400 / NCIMB 10682 / NRRL B-4536 / VPI 7372) (Clostridium thermocellum).